The primary structure comprises 89 residues: Acylphosphatase (89 aa).

An Acylphosphatase-like domain is found at 3–89; it reads RFTARVAGLV…QSDLTDFRRK (87 aa). Residues Arg-18 and Asn-36 contribute to the active site.

It belongs to the acylphosphatase family.

It catalyses the reaction an acyl phosphate + H2O = a carboxylate + phosphate + H(+). This chain is Acylphosphatase (acyP), found in Frankia casuarinae (strain DSM 45818 / CECT 9043 / HFP020203 / CcI3).